The chain runs to 326 residues: Protein-arginine N-acetylglucosaminyltransferase NleB2 (326 aa).

Residues 45–47 (QWF), tyrosine 69, and 216–219 (YLDM) each bind UDP-N-acetyl-alpha-D-glucosamine. A DXD motif motif is present at residues 218–220 (DMD). Aspartate 220 is a binding site for Mn(2+). Glutamate 250 serves as the catalytic Proton acceptor. Residues asparagine 317 and serine 319 each coordinate Mn(2+). UDP-N-acetyl-alpha-D-glucosamine-binding positions include serine 319 and 324-326 (SSW).

This sequence belongs to the glycosyltransferase NleB family. It depends on Mn(2+) as a cofactor.

Its subcellular location is the secreted. The protein resides in the host cell. It carries out the reaction L-arginyl-[protein] + UDP-N-acetyl-alpha-D-glucosamine = N(omega)-(N-acetyl-beta-D-glucosaminyl)-L-arginyl-[protein] + UDP + H(+). Protein-arginine N-acetylglucosaminyltransferase effector that catalyzes the transfer of a single N-acetylglucosamine (GlcNAc) to a conserved arginine residue of host target proteins. In contrast to NleB1, not able to disrupt TNF signaling in infected cells. Shows a lower enzymatic activity than NleB1. The sequence is that of Protein-arginine N-acetylglucosaminyltransferase NleB2 from Escherichia coli O145:H28 (strain RM12581).